A 453-amino-acid polypeptide reads, in one-letter code: MTRSIVSLQVGQCGNQVGLKFWEGISAEHGIDVDGKYIGDRPDQELHRIGVYYNESSSGSYVPRAAMLDLEPGVLMAIKNSKRGQLFHPDNFAYGQSGAGNNWAKGHYTEGAELVETALDIIRREAETCDVLQGFQVTHSLGGGTGSGMGTLLVSKIREEYPDRMMCTYSVLPSPKVSDTVVEPYNCTLSIHQLIENADCVFAIDNEALYNICYNTLKIEQPSYDELNSLISSVMSGITCSLRFPGQLNADLRKLAVNLVPFPRLHFFAVGHAPLAASNSAGYRSLSVPELAGQMFDRNNMMAEIDPREGRYLTAAVYFRGKVSTKEVEDEMTLMQTKNSAYFVEWIPHNIKTSVCDIPAAGEKISSAFIGNTTAIEATFKRFGNQFRSMFRRKAFLHWYKSEGMDELEFSEAESNLADLVSEYQQYGEATADGVEGYEEEGYENDHPEDDEE.

Residues Gln-12, Glu-71, Ser-140, Gly-144, Thr-145, Gly-146, Asn-206, and Asn-228 each contribute to the GTP site. Glu-71 contacts Mg(2+). The disordered stretch occupies residues 431-453 (TADGVEGYEEEGYENDHPEDDEE). Over residues 436–453 (EGYEEEGYENDHPEDDEE) the composition is skewed to acidic residues.

This sequence belongs to the tubulin family. In terms of assembly, dimer of alpha and beta chains. A typical microtubule is a hollow water-filled tube with an outer diameter of 25 nm and an inner diameter of 15 nM. Alpha-beta heterodimers associate head-to-tail to form protofilaments running lengthwise along the microtubule wall with the beta-tubulin subunit facing the microtubule plus end conferring a structural polarity. Microtubules usually have 13 protofilaments but different protofilament numbers can be found in some organisms and specialized cells. The cofactor is Mg(2+).

It is found in the cytoplasm. Its subcellular location is the cytoskeleton. In terms of biological role, tubulin is the major constituent of microtubules, a cylinder consisting of laterally associated linear protofilaments composed of alpha- and beta-tubulin heterodimers. Microtubules grow by the addition of GTP-tubulin dimers to the microtubule end, where a stabilizing cap forms. Below the cap, tubulin dimers are in GDP-bound state, owing to GTPase activity of alpha-tubulin. The chain is Tubulin beta-1 chain (TUBB) from Chondrus crispus (Carrageen Irish moss).